The sequence spans 174 residues: Ribosome maturation factor RimM (174 aa).

Residues 101 to 174 (AGEFYLADLC…IELLQRWILE (74 aa)) form the PRC barrel domain.

The protein belongs to the RimM family. As to quaternary structure, binds ribosomal protein uS19.

It localises to the cytoplasm. Functionally, an accessory protein needed during the final step in the assembly of 30S ribosomal subunit, possibly for assembly of the head region. Essential for efficient processing of 16S rRNA. May be needed both before and after RbfA during the maturation of 16S rRNA. It has affinity for free ribosomal 30S subunits but not for 70S ribosomes. The sequence is that of Ribosome maturation factor RimM from Treponema pallidum (strain Nichols).